Consider the following 269-residue polypeptide: Tryptophan synthase alpha chain (269 aa).

Active-site proton acceptor residues include Glu49 and Asp60.

This sequence belongs to the TrpA family. In terms of assembly, tetramer of two alpha and two beta chains.

It carries out the reaction (1S,2R)-1-C-(indol-3-yl)glycerol 3-phosphate + L-serine = D-glyceraldehyde 3-phosphate + L-tryptophan + H2O. It functions in the pathway amino-acid biosynthesis; L-tryptophan biosynthesis; L-tryptophan from chorismate: step 5/5. Functionally, the alpha subunit is responsible for the aldol cleavage of indoleglycerol phosphate to indole and glyceraldehyde 3-phosphate. This chain is Tryptophan synthase alpha chain, found in Buchnera aphidicola subsp. Acyrthosiphon pisum (strain APS) (Acyrthosiphon pisum symbiotic bacterium).